We begin with the raw amino-acid sequence, 280 residues long: 4-deoxy-L-threo-5-hexosulose-uronate ketol-isomerase (280 aa).

Zn(2+) contacts are provided by His198, His200, Glu205, and His247.

It belongs to the KduI family. Zn(2+) serves as cofactor.

The catalysed reaction is 5-dehydro-4-deoxy-D-glucuronate = 3-deoxy-D-glycero-2,5-hexodiulosonate. It functions in the pathway glycan metabolism; pectin degradation; 2-dehydro-3-deoxy-D-gluconate from pectin: step 4/5. Catalyzes the isomerization of 5-dehydro-4-deoxy-D-glucuronate to 3-deoxy-D-glycero-2,5-hexodiulosonate. The sequence is that of 4-deoxy-L-threo-5-hexosulose-uronate ketol-isomerase from Bacteroides fragilis (strain ATCC 25285 / DSM 2151 / CCUG 4856 / JCM 11019 / LMG 10263 / NCTC 9343 / Onslow / VPI 2553 / EN-2).